We begin with the raw amino-acid sequence, 206 residues long: Small ribosomal subunit protein uS4 (206 aa).

The 61-residue stretch at 96-156 folds into the S4 RNA-binding domain; sequence RRLDNVVYRM…EKSKNQLRIK (61 aa).

The protein belongs to the universal ribosomal protein uS4 family. As to quaternary structure, part of the 30S ribosomal subunit. Contacts protein S5. The interaction surface between S4 and S5 is involved in control of translational fidelity.

One of the primary rRNA binding proteins, it binds directly to 16S rRNA where it nucleates assembly of the body of the 30S subunit. Its function is as follows. With S5 and S12 plays an important role in translational accuracy. This Hahella chejuensis (strain KCTC 2396) protein is Small ribosomal subunit protein uS4.